The sequence spans 451 residues: Protein SAR DEFICIENT 1 (451 aa).

A DNA-binding region spans residues 149–270 (DKWTSDEFES…AFHKKLSSRH (122 aa)).

The protein belongs to the plant ACBP60 protein family. (Microbial infection) Interacts with V.dahliae SCP41.

The protein resides in the nucleus. Its function is as follows. Transcription activator that binds DNA in a sequence-specific manner, 5'-GAAATTTTGG-3', to promote the expression of target genes. Recruited to the promoter of ICS1 and other defense-related genes (e.g. PR1 and SID2) in response to both biotic (e.g. Pseudomonas syringae pv. maculicola ES4326) and abiotic stresses (e.g. UV-B), thus triggering slow defense responses by stimulating salicylic acid (SA) biosynthesis. Required for basal and systemic acquired resistance to P.syringae pv. maculicola and Hyaloperonospora arabidopsidis. This is Protein SAR DEFICIENT 1 from Arabidopsis thaliana (Mouse-ear cress).